Reading from the N-terminus, the 106-residue chain is Large ribosomal subunit protein uL24 (106 aa).

This sequence belongs to the universal ribosomal protein uL24 family. In terms of assembly, part of the 50S ribosomal subunit.

One of two assembly initiator proteins, it binds directly to the 5'-end of the 23S rRNA, where it nucleates assembly of the 50S subunit. Its function is as follows. One of the proteins that surrounds the polypeptide exit tunnel on the outside of the subunit. This Verminephrobacter eiseniae (strain EF01-2) protein is Large ribosomal subunit protein uL24.